A 433-amino-acid polypeptide reads, in one-letter code: GTPase Der (433 aa).

EngA-type G domains follow at residues 3–167 (KIVS…DKNI) and 175–349 (PRIA…FNLR). GTP-binding positions include 9-16 (GRPNVGKS), 56-60 (DTGGY), 119-122 (NKID), 181-188 (GRPNVGKS), 228-232 (DTAGI), and 293-296 (NKWD). One can recognise a KH-like domain in the interval 350–433 (LRIKTSLLNK…IPIKILFRLK (84 aa)).

Belongs to the TRAFAC class TrmE-Era-EngA-EngB-Septin-like GTPase superfamily. EngA (Der) GTPase family. As to quaternary structure, associates with the 50S ribosomal subunit.

GTPase that plays an essential role in the late steps of ribosome biogenesis. This is GTPase Der from Karelsulcia muelleri (strain GWSS) (Sulcia muelleri).